The primary structure comprises 269 residues: Embryonic polyadenylate-binding protein 2 (269 aa).

The segment at 26-54 is disordered; sequence EAQGWGAWGRTEKTSLVPSAGSDKEAEEN. The 78-residue stretch at 139 to 216 folds into the RRM domain; that stretch reads RSVYVGNVDY…RVIKVLPKRT (78 aa). Positions 240-269 are disordered; that stretch reads LQGSLQRKPRLRPHGQSRGRGRASPWFSPY. Basic residues predominate over residues 246–260; it reads RKPRLRPHGQSRGRG.

It localises to the cytoplasm. Its function is as follows. Binds the poly(A) tail of mRNA. The chain is Embryonic polyadenylate-binding protein 2 (Pabpn1l) from Rattus norvegicus (Rat).